The following is a 353-amino-acid chain: Inactive ADP-ribosyltransferase ARH2 (353 aa).

A Phosphoserine modification is found at S27.

Belongs to the ADP-ribosylglycohydrolase family. Expressed in the embryonic heart at E11.5.

It is found in the cytoplasm. The protein localises to the myofibril. Its subcellular location is the sarcomere. Its function is as follows. Required for myofibril assembly and outgrowth of the cardiac chambers in the developing heart. Appears to be catalytically inactive, showing no activity against O-acetyl-ADP-ribose. The sequence is that of Inactive ADP-ribosyltransferase ARH2 (Adprhl1) from Mus musculus (Mouse).